The chain runs to 128 residues: Ribosome-binding factor A (128 aa).

Belongs to the RbfA family. In terms of assembly, monomer. Binds 30S ribosomal subunits, but not 50S ribosomal subunits or 70S ribosomes.

The protein localises to the cytoplasm. Functionally, one of several proteins that assist in the late maturation steps of the functional core of the 30S ribosomal subunit. Associates with free 30S ribosomal subunits (but not with 30S subunits that are part of 70S ribosomes or polysomes). Required for efficient processing of 16S rRNA. May interact with the 5'-terminal helix region of 16S rRNA. In Rippkaea orientalis (strain PCC 8801 / RF-1) (Cyanothece sp. (strain PCC 8801)), this protein is Ribosome-binding factor A.